The chain runs to 367 residues: bZIP transcription factor 18 (367 aa).

The segment at 1–57 (MEDPSNPQPNQSNLSQCPPLATAPTPAPVRGPYHRRAHSEVQFRLPEDLDLSEPFGG) is disordered. Residues 38–47 (HSEVQFRLPE) are compositionally biased toward basic and acidic residues. Serine 70 carries the post-translational modification Phosphoserine. The disordered stretch occupies residues 79 to 124 (SGSGSASDSAGPSAPRSDNPFSAENGGAEAGNSRPRHRHSLSVDGS). Residues 82–96 (GSASDSAGPSAPRSD) show a composition bias toward low complexity. The region spanning 148–211 (DPKRAKRIIA…TGLSSENTEL (64 aa)) is the bZIP domain. The basic motif stretch occupies residues 150-171 (KRAKRIIANRQSAARSKERKAR). Residues 166-245 (KERKARYILE…VERLKFATGE (80 aa)) are a coiled coil. The segment at 176–190 (LERKVQTLQTEATTL) is leucine-zipper. Composition is skewed to polar residues over residues 294–309 (QPNNNQNQSSRTNPPT), 317–328 (ATSNAPAQSHSY), and 354–367 (FGRSDTVSESSSTM). Disordered stretches follow at residues 294-330 (QPNNNQNQSSRTNPPTAHQLMHHATSNAPAQSHSYSE) and 343-367 (LDISSCGRGSNFGRSDTVSESSSTM).

As to quaternary structure, interacts with NEAP1. Forms homodimer and heterodimer with bZIP34 and bZIP61. As to expression, ubiquitous. Strongly expressed in mature pollen.

Its subcellular location is the nucleus. It localises to the nucleoplasm. It is found in the cytoplasm. The protein localises to the perinuclear region. Its function is as follows. Transcription factor that may participate with bZIP34 in the gametophytic control of pollen development. This is bZIP transcription factor 18 from Arabidopsis thaliana (Mouse-ear cress).